Here is a 425-residue protein sequence, read N- to C-terminus: Formyl-CoA:oxalate CoA-transferase (425 aa).

Residues 17–18 (QS), Arg38, 72–75 (LDTK), 96–98 (NFG), Arg104, and 136–139 (KVYE) contribute to the CoA site. The Nucleophile role is filled by Asp168. Position 247-249 (247-249 (GGQ)) interacts with substrate.

It belongs to the CoA-transferase III family. Frc subfamily. In terms of assembly, homodimer.

The enzyme catalyses formyl-CoA + oxalate = oxalyl-CoA + formate. Its pathway is metabolic intermediate degradation; oxalate degradation; CO(2) and formate from oxalate: step 1/2. Functionally, involved in the catabolism of oxalate and in the adapatation to low pH via the induction of the oxalate-dependent acid tolerance response (ATR). Catalyzes the transfer of the CoA moiety from formyl-CoA to oxalate. In Bradyrhizobium diazoefficiens (strain JCM 10833 / BCRC 13528 / IAM 13628 / NBRC 14792 / USDA 110), this protein is Formyl-CoA:oxalate CoA-transferase.